Reading from the N-terminus, the 333-residue chain is Phosphoribosylformylglycinamidine cyclo-ligase (333 aa).

Belongs to the AIR synthase family.

Its subcellular location is the cytoplasm. The catalysed reaction is 2-formamido-N(1)-(5-O-phospho-beta-D-ribosyl)acetamidine + ATP = 5-amino-1-(5-phospho-beta-D-ribosyl)imidazole + ADP + phosphate + H(+). The protein operates within purine metabolism; IMP biosynthesis via de novo pathway; 5-amino-1-(5-phospho-D-ribosyl)imidazole from N(2)-formyl-N(1)-(5-phospho-D-ribosyl)glycinamide: step 2/2. This is Phosphoribosylformylglycinamidine cyclo-ligase from Clostridium perfringens (strain 13 / Type A).